The sequence spans 377 residues: Subtilisin-like protease CPC735_012930 (377 aa).

The N-terminal stretch at 1–20 is a signal peptide; that stretch reads MSILFKIFASTLAVVSVVNA. A propeptide spanning residues 21–118 is cleaved from the precursor; sequence GELLNFENER…VEPDRMASAT (98 aa). Residues 36 to 114 form the Inhibitor I9 domain; the sequence is SYIVVMKDGT…HVKYVEPDRM (79 aa). The 250-residue stretch at 128–377 folds into the Peptidase S8 domain; the sequence is SWGLGRISHT…NKLLYNKSGF (250 aa). Catalysis depends on charge relay system residues D160 and H191. N252 carries N-linked (GlcNAc...) asparagine glycosylation. The Charge relay system role is filled by S323. Residues N364 and N373 are each glycosylated (N-linked (GlcNAc...) asparagine).

This sequence belongs to the peptidase S8 family.

It localises to the secreted. Functionally, secreted subtilisin-like serine protease with keratinolytic activity that contributes to pathogenicity. This chain is Subtilisin-like protease CPC735_012930, found in Coccidioides posadasii (strain C735) (Valley fever fungus).